A 159-amino-acid polypeptide reads, in one-letter code: uncharacterized protein (159 aa).

Disordered regions lie at residues Met-1 to Ser-29 and Thr-114 to Thr-159. The span at Ser-15 to Ser-29 shows a compositional bias: polar residues.

This is an uncharacterized protein from Homo sapiens (Human).